The primary structure comprises 125 residues: Fluoride-specific ion channel FluC (125 aa).

The next 4 helical transmembrane spans lie at 1–21, 34–54, 72–92, and 101–121; these read MFAT…ARYG, FPWA…FLFF, TGGL…LVLF, and LLYM…GAWI. Na(+) contacts are provided by glycine 76 and threonine 79.

It belongs to the fluoride channel Fluc/FEX (TC 1.A.43) family.

The protein resides in the cell inner membrane. The catalysed reaction is fluoride(in) = fluoride(out). Na(+) is not transported, but it plays an essential structural role and its presence is essential for fluoride channel function. Fluoride-specific ion channel. Important for reducing fluoride concentration in the cell, thus reducing its toxicity. The chain is Fluoride-specific ion channel FluC from Acidithiobacillus ferrooxidans (strain ATCC 23270 / DSM 14882 / CIP 104768 / NCIMB 8455) (Ferrobacillus ferrooxidans (strain ATCC 23270)).